The sequence spans 319 residues: Coiled-coil domain-containing protein 149 (319 aa).

Coiled-coil stretches lie at residues 1-199 (MANQ…RKNS) and 259-286 (IQHQ…LEVS). The helical transmembrane segment at 298 to 318 (VSIGFGSMFFLKYLCLWLIAV) threads the bilayer.

It belongs to the CCDC149 family.

Its subcellular location is the membrane. The sequence is that of Coiled-coil domain-containing protein 149 (CCDC149) from Bos taurus (Bovine).